Reading from the N-terminus, the 63-residue chain is UPF0370 protein ECA1289 (63 aa).

The chain crosses the membrane as a helical span at residues 3–23 (WLADYWWIILIILIGMLINGI). The disordered stretch occupies residues 39–63 (PKLPPHRDNNDKWDNEEDDWPKKKP).

This sequence belongs to the UPF0370 family.

It is found in the cell membrane. This chain is UPF0370 protein ECA1289, found in Pectobacterium atrosepticum (strain SCRI 1043 / ATCC BAA-672) (Erwinia carotovora subsp. atroseptica).